We begin with the raw amino-acid sequence, 375 residues long: MSTAGKVIKCKAAVLWEEKKPFSIEEVEVAPPKAHEVRIKMVATGICRSDDHVVSGTLVTPLPVIAGHEAAGIVESIGEGVTTVRPGDKVIPLFTPQCGKCRVCKHPEGNFCLKNDLSMPRGTMQDGTSRFTCRGKPIHHFLGTSTFSQYTVVDEISVAKIDAASPLEKVCLIGCGFSTGYGSAVKVAKVTQGSTCAVFGLGGVGLSVIMGCKAAGAARIIGVDINKDKFAKAKEVGATECVNPQDYKKPIQEVLTEMSNGGVDFSFEVIGRLDTMVTALSCCQEAYGVSVIVGVPPDSQNLSMNPMLLLSGRTWKGAIFGGFKSKDSVPKLVADFMAKKFALDPLITHVLPFEKINEGFDLLRSGESIRTILTF.

S2 carries the N-acetylserine modification. The Zn(2+) site is built by C47, S49, H68, C98, C101, C104, C112, and C175. An alcohol-binding residues include S49 and H68. S49 serves as a coordination point for NAD(+). NAD(+) is bound by residues G200–G205, D224, K229, V293, V293–V295, F320, and R370.

It belongs to the zinc-containing alcohol dehydrogenase family. Class-I subfamily. Dimer of identical or non-identical chains of two types (E and S) coded by 2 separate genes at different loci. The cofactor is Zn(2+).

It is found in the cytoplasm. It carries out the reaction a primary alcohol + NAD(+) = an aldehyde + NADH + H(+). The enzyme catalyses a secondary alcohol + NAD(+) = a ketone + NADH + H(+). This chain is Alcohol dehydrogenase E chain, found in Equus caballus (Horse).